The sequence spans 603 residues: DNA ligase (603 aa).

Glu262 contacts ATP. The active-site N6-AMP-lysine intermediate is the Lys264. 6 residues coordinate ATP: Arg269, Arg285, Glu315, Phe355, Arg432, and Lys438.

The protein belongs to the ATP-dependent DNA ligase family. Mg(2+) is required as a cofactor.

The catalysed reaction is ATP + (deoxyribonucleotide)n-3'-hydroxyl + 5'-phospho-(deoxyribonucleotide)m = (deoxyribonucleotide)n+m + AMP + diphosphate.. Functionally, DNA ligase that seals nicks in double-stranded DNA during DNA replication, DNA recombination and DNA repair. This is DNA ligase from Caldivirga maquilingensis (strain ATCC 700844 / DSM 13496 / JCM 10307 / IC-167).